Consider the following 347-residue polypeptide: 3,4-dihydroxy-2-butanone 4-phosphate synthase (347 aa).

A DHBP synthase region spans residues 1–200 (MPLNRVREAI…ISDLIEYRMQ (200 aa)). D-ribulose 5-phosphate is bound by residues 27–28 (RE), D32, 139–143 (RTGHT), and E163. Residue E28 coordinates Mg(2+). H142 contacts Mg(2+). A GTP cyclohydrolase II-like region spans residues 201–347 (NEMLILIKER…IVLQGGPIQL (147 aa)).

This sequence in the N-terminal section; belongs to the DHBP synthase family. In the C-terminal section; belongs to the GTP cyclohydrolase II family. The cofactor is Mg(2+). Requires Mn(2+) as cofactor.

It catalyses the reaction D-ribulose 5-phosphate = (2S)-2-hydroxy-3-oxobutyl phosphate + formate + H(+). It functions in the pathway cofactor biosynthesis; riboflavin biosynthesis; 2-hydroxy-3-oxobutyl phosphate from D-ribulose 5-phosphate: step 1/1. Catalyzes the conversion of D-ribulose 5-phosphate to formate and 3,4-dihydroxy-2-butanone 4-phosphate. This Wolinella succinogenes (strain ATCC 29543 / DSM 1740 / CCUG 13145 / JCM 31913 / LMG 7466 / NCTC 11488 / FDC 602W) (Vibrio succinogenes) protein is 3,4-dihydroxy-2-butanone 4-phosphate synthase (ribB).